The primary structure comprises 406 residues: MSLIRVNGEAFNLSLESLKEDPFETKKTLETLIKQTSVILLAAGESRRFSQTIKKQWLRSNHTPLWLSVYESFTEALDFKEVILVVSELDYTYIKRHYPKIKLVRGGISRQESVCNALKVISGAYTLTSDVARGLANIEMLNDLFLTLQNTNHYCIAPYLPCYDTAIYYNEALDREAIKLIQTPQLSHTKTLQLALNQGDFKDESSAILQAFPDLVSYIEGSKDLHKLTTSDDLKIFTPFFNPAKDTFIGMGFDTHAFIKDKPMVLGGVVLDCEFGLKAHSDGDALLHAMIDAILGAIKGGDIGEWFPDNDPKYKNASSKELLKIVLDFSQSIGFELFEMGATIFSEIPKITPYKPAILENLSQLLGLEKSQISLKATTMEKMGFIGQQEGLLVQAHASMRYKQKL.

Residues 1-247 form a 2-C-methyl-D-erythritol 4-phosphate cytidylyltransferase region; sequence MSLIRVNGEA…TPFFNPAKDT (247 aa). The segment at 248–406 is 2-C-methyl-D-erythritol 2,4-cyclodiphosphate synthase; the sequence is FIGMGFDTHA…HASMRYKQKL (159 aa). Residues D254 and H256 each contribute to the a divalent metal cation site. Residues 254–256 and 280–281 contribute to the 4-CDP-2-C-methyl-D-erythritol 2-phosphate site; these read DTH and HS. Residue H288 coordinates a divalent metal cation. 4-CDP-2-C-methyl-D-erythritol 2-phosphate is bound by residues 302-304, 307-311, 378-381, and F385; these read DIG, FPDND, and TTME.

It in the N-terminal section; belongs to the IspD/TarI cytidylyltransferase family. IspD subfamily. In the C-terminal section; belongs to the IspF family. The cofactor is a divalent metal cation.

The catalysed reaction is 2-C-methyl-D-erythritol 4-phosphate + CTP + H(+) = 4-CDP-2-C-methyl-D-erythritol + diphosphate. The enzyme catalyses 4-CDP-2-C-methyl-D-erythritol 2-phosphate = 2-C-methyl-D-erythritol 2,4-cyclic diphosphate + CMP. It participates in isoprenoid biosynthesis; isopentenyl diphosphate biosynthesis via DXP pathway; isopentenyl diphosphate from 1-deoxy-D-xylulose 5-phosphate: step 2/6. The protein operates within isoprenoid biosynthesis; isopentenyl diphosphate biosynthesis via DXP pathway; isopentenyl diphosphate from 1-deoxy-D-xylulose 5-phosphate: step 4/6. Its function is as follows. Bifunctional enzyme that catalyzes the formation of 4-diphosphocytidyl-2-C-methyl-D-erythritol from CTP and 2-C-methyl-D-erythritol 4-phosphate (MEP) (IspD), and catalyzes the conversion of 4-diphosphocytidyl-2-C-methyl-D-erythritol 2-phosphate (CDP-ME2P) to 2-C-methyl-D-erythritol 2,4-cyclodiphosphate (ME-CPP) with a corresponding release of cytidine 5-monophosphate (CMP) (IspF). In Helicobacter acinonychis (strain Sheeba), this protein is Bifunctional enzyme IspD/IspF.